A 338-amino-acid polypeptide reads, in one-letter code: 1-aminocyclopropane-1-carboxylate deaminase (338 aa).

K51 carries the N6-(pyridoxal phosphate)lysine modification. S78 functions as the Nucleophile in the catalytic mechanism.

It belongs to the ACC deaminase/D-cysteine desulfhydrase family. Homotrimer. Pyridoxal 5'-phosphate is required as a cofactor.

The enzyme catalyses 1-aminocyclopropane-1-carboxylate + H2O = 2-oxobutanoate + NH4(+). Catalyzes a cyclopropane ring-opening reaction, the irreversible conversion of 1-aminocyclopropane-1-carboxylate (ACC) to ammonia and alpha-ketobutyrate. Allows growth on ACC as a nitrogen source. This chain is 1-aminocyclopropane-1-carboxylate deaminase, found in Pseudomonas sp. (strain ACP).